A 367-amino-acid polypeptide reads, in one-letter code: DNA replication and repair protein RecF (367 aa).

Glycine 30–threonine 37 serves as a coordination point for ATP.

Belongs to the RecF family.

Its subcellular location is the cytoplasm. Functionally, the RecF protein is involved in DNA metabolism; it is required for DNA replication and normal SOS inducibility. RecF binds preferentially to single-stranded, linear DNA. It also seems to bind ATP. This Clostridium beijerinckii (strain ATCC 51743 / NCIMB 8052) (Clostridium acetobutylicum) protein is DNA replication and repair protein RecF.